The following is a 466-amino-acid chain: A-type ATP synthase subunit B (466 aa).

It belongs to the ATPase alpha/beta chains family. In terms of assembly, has multiple subunits with at least A(3), B(3), C, D, E, F, H, I and proteolipid K(x).

It is found in the cell membrane. Component of the A-type ATP synthase that produces ATP from ADP in the presence of a proton gradient across the membrane. The B chain is a regulatory subunit. In Sulfolobus acidocaldarius (strain ATCC 33909 / DSM 639 / JCM 8929 / NBRC 15157 / NCIMB 11770), this protein is A-type ATP synthase subunit B.